Here is a 547-residue protein sequence, read N- to C-terminus: Nitrate transporter 2.1 (547 aa).

A run of 12 helical transmembrane segments spans residues 53 to 73, 86 to 106, 113 to 133, 143 to 163, 173 to 193, 211 to 231, 262 to 280, 296 to 316, 338 to 358, 366 to 386, 400 to 420, and 433 to 453; these read WICFFMSFVATFAPASLAPII, NAGVAAVCGAIAARIFMGIVV, YGAAATMLMTAPAVFCMALVT, FFIGLSLCMFVCCQFWCGTMF, AIAAGWGNMGGGACHFIMPLI, AFFVPGGIYILTATLTLLLGI, LGNYRSWILALTYGYSFGV, FGLNLAVAGALGAIFGLMNLF, IWALWIIQTLGGIFCIVLGKV, IVIMIVFSIFCQQACGLHFGI, GLVGAGGNTGAAITQAIWFAG, and GFVYMGIMTIGLTLPLFFIWF.

This sequence belongs to the major facilitator superfamily. Nitrate/nitrite porter (TC 2.A.1.8) family.

It localises to the cell membrane. With respect to regulation, nitrite transport mediated by system 1 is very sensitive to inhibition by nitrate. In terms of biological role, involved in nitrate transport, but does not seem to be able to mediate transport by its own. Acts as a dual component transporter with NAR2 (system 1). Imports nitrate with high affinity when expressed with NAR2 in a heterologous system (Xenopus oocytes). Involved in a high affinity and a high capacity transport specific for both nitrate and nitrite. The polypeptide is Nitrate transporter 2.1 (Chlamydomonas reinhardtii (Chlamydomonas smithii)).